We begin with the raw amino-acid sequence, 134 residues long: Probable thionin-2.4 (134 aa).

A signal peptide spans 1–24 (MEGKTLIVSVLIMSLFMAQNQVDA). 3 disulfides stabilise this stretch: Cys27–Cys64, Cys28–Cys56, and Cys40–Cys50. A propeptide spans 71–134 (DILENTGDAV…KGSMNAVENA (64 aa)) (acidic domain).

Belongs to the plant thionin (TC 1.C.44) family.

The protein resides in the secreted. Functionally, thionins are small plant proteins which are toxic to animal cells. They seem to exert their toxic effect at the level of the cell membrane. Their precise function is not known. This chain is Probable thionin-2.4, found in Arabidopsis thaliana (Mouse-ear cress).